We begin with the raw amino-acid sequence, 285 residues long: Protease HtpX homolog (285 aa).

A run of 2 helical transmembrane segments spans residues 7–27 (TAMLMAAITALFIVIGGMIGG) and 30–50 (GMTIALLFALGMNFFSYWFSD). His131 is a Zn(2+) binding site. Glu132 is an active-site residue. His135 is a Zn(2+) binding site. The next 2 membrane-spanning stretches (helical) occupy residues 146–166 (ITATMAGAISAIANFAMFFGG) and 177–197 (IAGIAVALLAPIAGALIQMAI). Glu202 is a binding site for Zn(2+).

Belongs to the peptidase M48B family. It depends on Zn(2+) as a cofactor.

The protein resides in the cell inner membrane. The polypeptide is Protease HtpX homolog (Burkholderia multivorans (strain ATCC 17616 / 249)).